Consider the following 77-residue polypeptide: Chassatide C2 (77 aa).

A signal peptide spans 1 to 24 (MAKFANYLMLFLLVASLVMLEAQS). Positions 25 to 44 (SDTIKVPDLGKRLLMNRDPN) are cleaved as a propeptide — removed in mature form. A cross-link (cyclopeptide (Gly-Asn)) is located at residues 45–75 (GIPCAESCVWIPCTITALMGCSCKNNVCYNN). 3 cysteine pairs are disulfide-bonded: Cys48–Cys65, Cys52–Cys67, and Cys57–Cys72. A Methionine sulfoxide; in form chassatide chaC2A modification is found at Met63. A propeptide spans 76-77 (EL) (removed in mature form).

Belongs to the cyclotide family. Bracelet subfamily. This is a cyclic peptide. Expressed in fruit, pedicel and stem but not in leaf and root (at protein level).

Functionally, chassatide C2: Probably participates in a plant defense mechanism. Has no activity against bacteria up to a concentration of 80 uM. Has cytotoxic but no hemolytic activity. In terms of biological role, chassatide C2A: Probably participates in a plant defense mechanism. Has no activity against bacteria up to a concentration of 80 uM. Has no cytotoxic and no hemolytic activity. This Chassalia chartacea (Chassalia curviflora) protein is Chassatide C2.